The following is a 972-amino-acid chain: Mast/stem cell growth factor receptor Kit (972 aa).

The signal sequence occupies residues 1 to 25; sequence MRGARGAWDFLCVLLLLLRVQTGSS. At 26–520 the chain is on the extracellular side; that stretch reads QPSVSPEEAS…QIQPHTLFTP (495 aa). 5 consecutive Ig-like C2-type domains span residues 27–112, 121–205, 212–308, 317–410, and 413–507; these read PSVS…VFVR, DRSL…LKVR, PVVS…LEVV, PMIN…VYVN, and PEIL…FNFA. Cys58 and Cys97 are joined by a disulfide. Asn130 and Asn145 each carry an N-linked (GlcNAc...) asparagine glycan. Cystine bridges form between Cys136-Cys186, Cys151-Cys183, and Cys233-Cys290. N-linked (GlcNAc...) asparagine glycosylation is found at Asn283, Asn300, Asn320, Asn352, Asn367, Asn463, and Asn486. Cys428 and Cys491 form a disulfide bridge. The chain crosses the membrane as a helical span at residues 521–541; it reads LLIGFVVVAGMMCIIVMILTY. Over 542-972 the chain is Cytoplasmic; sequence KYLQKPMYEV…SQPLLVRDDV (431 aa). Residues Tyr543 and Tyr549 each carry the phosphotyrosine modification. Residue Tyr564 participates in Mg(2+) binding. A phosphotyrosine; by autocatalysis mark is found at Tyr564 and Tyr566. The important for interaction with phosphotyrosine-binding proteins stretch occupies residues 564–566; it reads YVY. Residues 585–933 enclose the Protein kinase domain; the sequence is LSFGKTLGAG…ISESTNHIYS (349 aa). ATP is bound by residues 592–599, Lys619, and 667–673; these read GAGAFGKV and EYCCYGD. Phosphotyrosine; by autocatalysis occurs at positions 699 and 717. Tyr726 is modified (phosphotyrosine). Phosphoserine; by PKC/PRKCA is present on residues Ser737 and Ser742. Asp788 serves as the catalytic Proton acceptor. Residue Arg792 coordinates ATP. 2 residues coordinate Mg(2+): Asn793 and Asp806. Ser817 is subject to Phosphoserine. Tyr819 bears the Phosphotyrosine; by autocatalysis mark. Phosphoserine is present on Ser887. Position 896 is a phosphotyrosine (Tyr896). The residue at position 932 (Tyr932) is a Phosphotyrosine; by autocatalysis. At Ser955 the chain carries Phosphoserine.

It belongs to the protein kinase superfamily. Tyr protein kinase family. CSF-1/PDGF receptor subfamily. In terms of assembly, monomer in the absence of bound KITLG/SCF. Homodimer in the presence of bound KITLG/SCF, forming a heterotetramer with two KITLG/SCF molecules. Interacts (via phosphorylated tyrosine residues) with the adapter proteins GRB2 and GRB7 (via SH2 domain), and SH2B2/APS. Interacts (via C-terminus) with MPDZ (via the tenth PDZ domain). Interacts (via phosphorylated tyrosine residues) with PIK3R1 and PIK3CD. Interacts (via phosphorylated tyrosine) with CRK (isoform Crk-II), FYN, SHC1 and MATK/CHK (via SH2 domain). Interacts with LYN and FES/FPS. Interacts (via phosphorylated tyrosine residues) with the protein phosphatases PTPN6/SHP-1 (via SH2 domain), PTPN11/SHP-2 (via SH2 domain) and PTPRU. Interacts with PLCG1. Interacts with DOK1 and TEC. Interacts with IL1RAP (independent of stimulation with KITLG/SCF). A mast cell-specific KITLG/SCF-induced interleukin-33 signaling complex contains IL1RL1, IL1RAP, KIT and MYD88. In terms of processing, ubiquitinated by SOCS6. KIT is rapidly ubiquitinated after autophosphorylation induced by KITLG/SCF binding, leading to internalization and degradation. Autophosphorylated on tyrosine residues. KITLG/SCF binding promotes autophosphorylation. Phosphorylated tyrosine residues are important for interaction with specific binding partners.

It is found in the cell membrane. The catalysed reaction is L-tyrosyl-[protein] + ATP = O-phospho-L-tyrosyl-[protein] + ADP + H(+). With respect to regulation, present in an inactive conformation in the absence of bound ligand. KITLG/SCF binding leads to dimerization and activation by autophosphorylation on tyrosine residues. Activity is down-regulated by PRKCA-mediated phosphorylation on serine residues. Tyrosine-protein kinase that acts as a cell-surface receptor for the cytokine KITLG/SCF and plays an essential role in the regulation of cell survival and proliferation, hematopoiesis, stem cell maintenance, gametogenesis, mast cell development, migration and function, and in melanogenesis. In response to KITLG/SCF binding, KIT can activate several signaling pathways. Phosphorylates PIK3R1, PLCG1, SH2B2/APS and CBL. Activates the AKT1 signaling pathway by phosphorylation of PIK3R1, the regulatory subunit of phosphatidylinositol 3-kinase. Activated KIT also transmits signals via GRB2 and activation of RAS, RAF1 and the MAP kinases MAPK1/ERK2 and/or MAPK3/ERK1. Promotes activation of STAT family members STAT1, STAT3, STAT5A and STAT5B. Activation of PLCG1 leads to the production of the cellular signaling molecules diacylglycerol and inositol 1,4,5-trisphosphate. KIT signaling is modulated by protein phosphatases, and by rapid internalization and degradation of the receptor. Activated KIT promotes phosphorylation of the protein phosphatases PTPN6/SHP-1 and PTPRU, and of the transcription factors STAT1, STAT3, STAT5A and STAT5B. Promotes phosphorylation of PIK3R1, CBL, CRK (isoform Crk-II), LYN, MAPK1/ERK2 and/or MAPK3/ERK1, PLCG1, SRC and SHC1. In Callithrix jacchus (White-tufted-ear marmoset), this protein is Mast/stem cell growth factor receptor Kit (KIT).